Consider the following 284-residue polypeptide: L-ribulose-5-phosphate 3-epimerase UlaE (284 aa).

Belongs to the L-ribulose-5-phosphate 3-epimerase family.

The catalysed reaction is L-ribulose 5-phosphate = L-xylulose 5-phosphate. Its pathway is cofactor degradation; L-ascorbate degradation; D-xylulose 5-phosphate from L-ascorbate: step 3/4. Catalyzes the isomerization of L-xylulose-5-phosphate to L-ribulose-5-phosphate. Is involved in the anaerobic L-ascorbate utilization. The sequence is that of L-ribulose-5-phosphate 3-epimerase UlaE from Salmonella heidelberg (strain SL476).